The sequence spans 65 residues: Large ribosomal subunit protein bL35 (65 aa).

The protein belongs to the bacterial ribosomal protein bL35 family.

The chain is Large ribosomal subunit protein bL35 from Pectobacterium atrosepticum (strain SCRI 1043 / ATCC BAA-672) (Erwinia carotovora subsp. atroseptica).